The sequence spans 317 residues: Protoheme IX farnesyltransferase (317 aa).

9 consecutive transmembrane segments (helical) span residues 39 to 58 (VMSL…PGSL), 62 to 84 (LGAI…NMWY), 100 to 120 (IPAG…LAVG), 123 to 143 (LVMW…AIFF), 160 to 180 (IVIG…AVTG), 184 to 204 (LMPV…FWSL), 233 to 253 (IMAY…LGDT), 256 to 276 (VYGL…WRVL), and 293 to 313 (ARAA…ALAV).

It belongs to the UbiA prenyltransferase family. Protoheme IX farnesyltransferase subfamily.

The protein localises to the cell inner membrane. It carries out the reaction heme b + (2E,6E)-farnesyl diphosphate + H2O = Fe(II)-heme o + diphosphate. Its pathway is porphyrin-containing compound metabolism; heme O biosynthesis; heme O from protoheme: step 1/1. Converts heme B (protoheme IX) to heme O by substitution of the vinyl group on carbon 2 of heme B porphyrin ring with a hydroxyethyl farnesyl side group. This chain is Protoheme IX farnesyltransferase, found in Granulibacter bethesdensis (strain ATCC BAA-1260 / CGDNIH1).